The chain runs to 373 residues: MTSALCSKPIAPHTLSDDLADLSYSNTMALACMADSVVTLTDEVQLDEFMAYYEQDTQHRKPLFVLSGGSNVLLPAKLNAIVLRPQMRGIQVTAQTDFHVDIEVMAGENWHDLVVHTVAQGWYGLENLALIPGLTGAAPIQNIGAYGVQLEDCLQYVRAYHLPSQTWHDLTAVDCEFGYRDSIFKRQPNTWLISRVGFRLHTDATKVLASYGDVQTVAQSYATQQGRTKPMPADVMHAIIEIRQQKLPDPKQLPNCGSFFQNPIVPQDQFATLQSSYPAIVGYPMPDAMTKVAAGWLIEQAGLKGGGIEPIFTHQQQALVLTNHAPYIATKQDVAAAQKYIIDTVYKKFAIQLSREPVWVNADGSIGYDEHVV.

One can recognise an FAD-binding PCMH-type domain in the interval 30-203; the sequence is LACMADSVVT…SRVGFRLHTD (174 aa). The active site involves Arg-180. The active-site Proton donor is Ser-258. Glu-356 is an active-site residue.

This sequence belongs to the MurB family. The cofactor is FAD.

The protein resides in the cytoplasm. The catalysed reaction is UDP-N-acetyl-alpha-D-muramate + NADP(+) = UDP-N-acetyl-3-O-(1-carboxyvinyl)-alpha-D-glucosamine + NADPH + H(+). Its pathway is cell wall biogenesis; peptidoglycan biosynthesis. Functionally, cell wall formation. The sequence is that of UDP-N-acetylenolpyruvoylglucosamine reductase from Psychrobacter cryohalolentis (strain ATCC BAA-1226 / DSM 17306 / VKM B-2378 / K5).